We begin with the raw amino-acid sequence, 696 residues long: D-(-)-3-hydroxybutyrate oligomer hydrolase (696 aa).

The N-terminal stretch at 1-20 is a signal peptide; it reads MTRLGWGRRMVFGAALAAVA. Catalysis depends on Ser-309, which acts as the Charge relay system.

Belongs to the D-(-)-3-hydroxybutyrate oligomer hydrolase family.

It localises to the secreted. It catalyses the reaction (3R)-hydroxybutanoate dimer + H2O = 2 (R)-3-hydroxybutanoate + H(+). Its pathway is lipid metabolism; butanoate metabolism. In terms of biological role, participates in the degradation of poly-3-hydroxybutyrate (PHB). It works downstream of poly(3-hydroxybutyrate) depolymerase, hydrolyzing D(-)-3-hydroxybutyrate oligomers of various length (3HB-oligomers) into 3HB-monomers. This Burkholderia lata (strain ATCC 17760 / DSM 23089 / LMG 22485 / NCIMB 9086 / R18194 / 383) protein is D-(-)-3-hydroxybutyrate oligomer hydrolase.